A 531-amino-acid chain; its full sequence is Jacalin-related lectin 16 (531 aa).

4 consecutive Jacalin-type lectin domains span residues 1–87 (MDRS…YFTW), 90–232 (PTKM…YFTT), 235–378 (LISL…YFRP), and 385–528 (TEKV…NVLP).

Belongs to the jacalin lectin family.

The chain is Jacalin-related lectin 16 (JAL16) from Arabidopsis thaliana (Mouse-ear cress).